A 373-amino-acid chain; its full sequence is Decapping nuclease RAI1 (373 aa).

Glu-136 serves as a coordination point for a divalent metal cation. Residues Cys-168 and Glu-185 each contribute to the substrate site. Residues Asp-187, Glu-205, and Leu-206 each coordinate a divalent metal cation. Substrate-binding residues include Lys-207 and Gln-231. The interval 340–373 is disordered; that stretch reads KDKPPGFEPSDAADAEPSMAEEPVPETASASGAY.

It belongs to the DXO/Dom3Z family. As to quaternary structure, interacts with RAT1; the interaction is direct, stabilizes RAT1 protein structure and stimulates its exoribonuclease activity. The interaction also stimulates RAI1 pyrophosphohydrolase activity, probably by recruiting it to mRNA substrates. A divalent metal cation serves as cofactor.

It localises to the nucleus. It carries out the reaction a 5'-end NAD(+)-phospho-ribonucleoside in mRNA + H2O = a 5'-end phospho-ribonucleoside in mRNA + NAD(+) + H(+). The catalysed reaction is a 5'-end (N(7)-methyl 5'-triphosphoguanosine)-ribonucleoside-ribonucleotide in mRNA + H2O = a (N(7)-methyl 5'-triphosphoguanosine)-nucleoside + a 5'-end phospho-ribonucleoside in mRNA + H(+). It catalyses the reaction a 5'-end triphospho-ribonucleoside in mRNA + H2O = a 5'-end phospho-ribonucleoside in mRNA + diphosphate + H(+). Functionally, decapping enzyme for NAD-capped RNAs: specifically hydrolyzes the nicotinamide adenine dinucleotide (NAD) cap from a subset of RNAs by removing the entire NAD moiety from the 5'-end of an NAD-capped RNA. The NAD-cap is present at the 5'-end of some RNAs and snoRNAs. In contrast to the canonical 5'-end N7 methylguanosine (m7G) cap, the NAD cap promotes mRNA decay. Also acts as a non-canonical decapping enzyme that removes the entire cap structure of m7G capped or incompletely capped RNAs. Has decapping activity toward incomplete 5'-end m7G cap mRNAs such as unmethylated 5'-end-capped RNA (cap0), while it has no activity toward 2'-O-ribose methylated m7G cap (cap1). Also possesses RNA 5'-pyrophosphohydrolase activity by hydrolyzing the 5'-end triphosphate to release pyrophosphates. Stimulates exoribonuclease activity of Rat1, allowing it to degrade RNAs with stable secondary structure more effectively. This Chaetomium globosum (strain ATCC 6205 / CBS 148.51 / DSM 1962 / NBRC 6347 / NRRL 1970) (Soil fungus) protein is Decapping nuclease RAI1 (RAI1).